A 188-amino-acid polypeptide reads, in one-letter code: Protein GrpE (188 aa).

It belongs to the GrpE family. In terms of assembly, homodimer.

The protein resides in the cytoplasm. Participates actively in the response to hyperosmotic and heat shock by preventing the aggregation of stress-denatured proteins, in association with DnaK and GrpE. It is the nucleotide exchange factor for DnaK and may function as a thermosensor. Unfolded proteins bind initially to DnaJ; upon interaction with the DnaJ-bound protein, DnaK hydrolyzes its bound ATP, resulting in the formation of a stable complex. GrpE releases ADP from DnaK; ATP binding to DnaK triggers the release of the substrate protein, thus completing the reaction cycle. Several rounds of ATP-dependent interactions between DnaJ, DnaK and GrpE are required for fully efficient folding. This Chromobacterium violaceum (strain ATCC 12472 / DSM 30191 / JCM 1249 / CCUG 213 / NBRC 12614 / NCIMB 9131 / NCTC 9757 / MK) protein is Protein GrpE.